The chain runs to 281 residues: DegV domain-containing protein (281 aa).

A DegV domain is found at 3 to 280 (WKIVSDSGCD…EGGLLMGYEI (278 aa)). Serine 63 and serine 91 together coordinate hexadecanoate.

In terms of biological role, may bind long-chain fatty acids, such as palmitate, and may play a role in lipid transport or fatty acid metabolism. The sequence is that of DegV domain-containing protein from Streptococcus gordonii.